Reading from the N-terminus, the 104-residue chain is Urease subunit beta (104 aa).

It belongs to the urease beta subunit family. As to quaternary structure, heterotrimer of UreA (gamma), UreB (beta) and UreC (alpha) subunits. Three heterotrimers associate to form the active enzyme.

The protein localises to the cytoplasm. It catalyses the reaction urea + 2 H2O + H(+) = hydrogencarbonate + 2 NH4(+). Its pathway is nitrogen metabolism; urea degradation; CO(2) and NH(3) from urea (urease route): step 1/1. The protein is Urease subunit beta of Synechococcus sp. (strain RCC307).